A 2130-amino-acid polypeptide reads, in one-letter code: DNA polymerase zeta catalytic subunit (2130 aa).

Disordered stretches follow at residues Pro-528–Leu-635, Gly-734–Ala-891, Phe-927–Pro-954, and Gln-1189–Gln-1243. Residues Thr-553–Ile-574 are compositionally biased toward low complexity. Residues Pro-620–Gly-629 are compositionally biased toward polar residues. The span at Cys-735–Pro-753 shows a compositional bias: basic and acidic residues. Polar residues-rich tracts occupy residues Ser-771 to Asp-786, Leu-794 to Gly-808, and Asp-818 to Glu-835. Residues Leu-840–Arg-860 are compositionally biased toward basic and acidic residues. Residues Thr-938–Pro-954 are compositionally biased toward polar residues. The segment covering Pro-1228 to Gln-1243 has biased composition (low complexity). Positions 2041, 2045, 2054, and 2057 each coordinate Zn(2+). Cys-2086, Cys-2089, Cys-2098, and Cys-2103 together coordinate [4Fe-4S] cluster. A CysB motif motif is present at residues Cys-2086 to Cys-2103.

It belongs to the DNA polymerase type-B family. In terms of assembly, catalytic subunit of the zeta DNA polymerase complex, which consists of PolZ1/DNApol-zeta and the accessory component PolZ2/Rev7. Interacts with the apurinic/apyrimidinic (AP) endonuclease Rrp1; the interaction is likely indirect and mediated via PolZ2. [4Fe-4S] cluster is required as a cofactor.

It catalyses the reaction DNA(n) + a 2'-deoxyribonucleoside 5'-triphosphate = DNA(n+1) + diphosphate. Inhibited by tetracyclic diterpene antibiotic aphidicolin. In terms of biological role, as the catalytic subunit of the DNA polymerase zeta complex, plays a crucial role in translesion DNA synthesis (TLS) and various DNA repair mechanisms. Lacks an intrinsic 3'-5' exonuclease activity and thus has no proofreading function. During homologous recombination (HR) repair, has a overlapping role with the error-prone translesion polymerase eta to initiate repair synthesis which is completed by end joining or another polymerase that can bind and reinitiate synthesis. May participate in the Rrp1-dependent base excision repair (BER) pathway responsible for repair of DNA lesions that gives rise to apurinic/apyrimidinic (AP) sites. Unlike mammalian orthologs, it is not an error-prone polymerase. The polypeptide is DNA polymerase zeta catalytic subunit (Drosophila melanogaster (Fruit fly)).